Consider the following 208-residue polypeptide: dTTP/UTP pyrophosphatase (208 aa).

The interval 28–48 is disordered; sequence DRIHPADIDETPQRAEHPRSL. Catalysis depends on Asp-79, which acts as the Proton acceptor.

The protein belongs to the Maf family. YhdE subfamily. Requires a divalent metal cation as cofactor.

It is found in the cytoplasm. It carries out the reaction dTTP + H2O = dTMP + diphosphate + H(+). It catalyses the reaction UTP + H2O = UMP + diphosphate + H(+). Functionally, nucleoside triphosphate pyrophosphatase that hydrolyzes dTTP and UTP. May have a dual role in cell division arrest and in preventing the incorporation of modified nucleotides into cellular nucleic acids. In Brucella abortus (strain 2308), this protein is dTTP/UTP pyrophosphatase.